We begin with the raw amino-acid sequence, 264 residues long: Versicolorin reductase stcU (264 aa).

Residues Ile23, Asp69, Asn96, and Arg129 each contribute to the NADP(+) site. Active-site proton donor residues include Ser145 and Ser146. Residues Tyr160, Lys164, Ile193, and Thr195 each contribute to the NADP(+) site. The Proton acceptor role is filled by Tyr160. Lys164 serves as the catalytic Lowers pKa of active site Tyr.

This sequence belongs to the short-chain dehydrogenases/reductases (SDR) family.

It carries out the reaction (4S,8R)-2,13,16,20-tetrahydroxy-7,9-dioxapentacyclo[10.8.0.0(3,10).0(4,8).0(14,19)]icosa-1(12),2,5,10,13,16,19-heptaen-18-one + NADPH + H(+) = (4S,8R,16R)-2,13,16,20-tetrahydroxy-7,9-dioxapentacyclo[10.8.0.0(3,10).0(4,8).0(14,19)]icosa-1(12),2,5,10,13,19-hexaen-18-one + NADP(+). It participates in mycotoxin biosynthesis; sterigmatocystin biosynthesis. Versicolorin reductase; part of the gene cluster that mediates the biosynthesis of sterigmatocystin (ST), a polyketide-derived furanocoumarin which is part of the most toxic and carcinogenic compounds among the known mycotoxins. The first step in the biosynthesis of sterigmatocystin is the production of hexanoate by the fatty acid synthase (FAS) units stcJ and stcK. The polyketide backbone is assembled by the non-reducing polyketide synthase stcA by condensation of the starter hexanoyl-CoA and 7 malonyl-CoA extender units followed by cyclization and release of norsolorinic acid. Norsolorinic acid is the first stable intermediate in the biosynthesis of sterigmatocystin and is converted into averantin (AVN) by the ketoreductase stcE which reduces the hexanoate ketone to an alcohol. Averantin is then oxidized into 5'-hydroxyaverantin (HAVN) by the cytochrome P450 monooxygenase stcF. 5'-hydroxyaverantin is further converted to 5'-oxyaverantin (OAVN) by the 5'-hydroxyaverantin dehydrogenase stcG. The next step is the conversion of OAVN into averufin (AVF) which is catalyzed by a yet to be identified enzyme. The cytochrome P450 monooxygenase stcB and the flavin-binding monooxygenase stcW are both required for the conversion of averufin to 1-hydroxyversicolorone. The esterase stcI probably catalyzes the formation of versiconal hemiacetal acetate from 1-hydroxyversicolorone. The oxydoreductase stcN then probably catalyzes the biosynthetic step from versiconal to versicolorin B (VERB). The next step is performed by the versicolorin B desaturase stcL to produce versicolorin A (VERA). The ketoreductase stcU and the cytochrome P450 monooxygenase stcS are involved in the conversion of versicolorin A to demethylsterigmatocystin. The Baeyer-Villiger oxidas stcQ and the reductase stcR might be involved in the biosynthetic step from versicolorin A to demethylsterigmatocystin. The final step in the biosynthesis of sterigmatocystin is the methylation of demethylsterigmatocystin catalyzed by the methyltransferase stcP. The polypeptide is Versicolorin reductase stcU (Emericella nidulans (strain FGSC A4 / ATCC 38163 / CBS 112.46 / NRRL 194 / M139) (Aspergillus nidulans)).